Here is a 729-residue protein sequence, read N- to C-terminus: Adenosylcobalamin-dependent ribonucleoside-triphosphate reductase (729 aa).

Cys189 and Cys438 are disulfide-bonded. Catalysis depends on residues Cys427 and Glu429.

It belongs to the class II ribonucleoside-triphosphate reductase family. Monomer. Requires adenosylcob(III)alamin as cofactor.

The enzyme catalyses a 2'-deoxyribonucleoside 5'-triphosphate + [thioredoxin]-disulfide + H2O = a ribonucleoside 5'-triphosphate + [thioredoxin]-dithiol. The chain is Adenosylcobalamin-dependent ribonucleoside-triphosphate reductase (rnr) from Euglena gracilis.